The following is a 213-amino-acid chain: MKSLQALFGGTFDPVHYGHLKPVETLANLIGLSRVIIMPNNVPPHRPQPEASSAQRKYMLELAIADKPLFTLDERELQRNAPSYTAQTLKAWREEQGPEAPLAFIIGQDSLLNFPTWHDYDTILDNTHLIVCRRPGYPLEMTQAQHQQWLEQHLTHTPDDLHQLPAGKIYLAETPWLNISATLIRERLEKGESCDDLLPENVLNYINQQGLYR.

The protein belongs to the NadD family.

The catalysed reaction is nicotinate beta-D-ribonucleotide + ATP + H(+) = deamido-NAD(+) + diphosphate. Its pathway is cofactor biosynthesis; NAD(+) biosynthesis; deamido-NAD(+) from nicotinate D-ribonucleotide: step 1/1. Functionally, catalyzes the reversible adenylation of nicotinate mononucleotide (NaMN) to nicotinic acid adenine dinucleotide (NaAD). This Salmonella typhimurium (strain LT2 / SGSC1412 / ATCC 700720) protein is Nicotinate-nucleotide adenylyltransferase.